The sequence spans 681 residues: Methionine--tRNA ligase (681 aa).

Residues 15–25 (PYANGPIHLGH) carry the 'HIGH' region motif. The Zn(2+) site is built by Cys-146, Cys-149, Cys-159, and Cys-162. The 'KMSKS' region motif lies at 332–336 (KMSKS). Lys-335 is an ATP binding site. Residues 547-569 (DNMAQAPKDNGKAKKDKKEAKSE) are disordered. A compositionally biased stretch (basic and acidic residues) spans 555 to 569 (DNGKAKKDKKEAKSE). The tRNA-binding domain occupies 580-681 (DFAKIDLRIA…SGAQPGMQVK (102 aa)).

It belongs to the class-I aminoacyl-tRNA synthetase family. MetG type 1 subfamily. In terms of assembly, homodimer. It depends on Zn(2+) as a cofactor.

It localises to the cytoplasm. It catalyses the reaction tRNA(Met) + L-methionine + ATP = L-methionyl-tRNA(Met) + AMP + diphosphate. Is required not only for elongation of protein synthesis but also for the initiation of all mRNA translation through initiator tRNA(fMet) aminoacylation. The chain is Methionine--tRNA ligase from Hahella chejuensis (strain KCTC 2396).